A 359-amino-acid polypeptide reads, in one-letter code: MISKLSVNPTFSPSYNIIVDSVLDFSHILEYVTNKQVLVVTNTTVAKLYLTKFLAALVDDLDVRTCILEDGEQYKSQQSLDKILSTLLENHFTRNSTVLVALGGGVIGDITGFAAAIYQRGIDFIQIPTTLLSQVDSSVGGKTAINHQLGKNMIGAFYQPKVVYTSIEFYKTLSQREYIAGMAEVVKYAFISKDFYLWLDSNRDKILAKDSVTLIEMVKRSCQIKAQVVAMDEKELTGARAILNFGHTFGHAIEKCQNYRGLKHGEAVGVGMAQAIDFSHYLGLISQQQAKDFNDFIVSFGISIDFPNDICQKEFLEAMLLDKKNSNKELKFILIENIGSLSLQKQSKNELEQFLDISR.

NAD(+) is bound by residues 70-75 (DGEQYK), 105-109 (GVIGD), 129-130 (TT), K142, K151, and 169-172 (FYKT). 3 residues coordinate Zn(2+): E184, H247, and H264.

The protein belongs to the sugar phosphate cyclases superfamily. Dehydroquinate synthase family. It depends on Co(2+) as a cofactor. The cofactor is Zn(2+). Requires NAD(+) as cofactor.

It is found in the cytoplasm. The enzyme catalyses 7-phospho-2-dehydro-3-deoxy-D-arabino-heptonate = 3-dehydroquinate + phosphate. The protein operates within metabolic intermediate biosynthesis; chorismate biosynthesis; chorismate from D-erythrose 4-phosphate and phosphoenolpyruvate: step 2/7. Functionally, catalyzes the conversion of 3-deoxy-D-arabino-heptulosonate 7-phosphate (DAHP) to dehydroquinate (DHQ). The polypeptide is 3-dehydroquinate synthase (Francisella tularensis subsp. tularensis (strain WY96-3418)).